We begin with the raw amino-acid sequence, 1527 residues long: Lysophospholipase nte1 (1527 aa).

Residues 1 to 73 (MADSGASVPS…SPPTPTTMVG (73 aa)) lie on the Cytoplasmic side of the membrane. A helical membrane pass occupies residues 74 to 94 (WIGWVFSLVFQTIPSVLYWVI). Residues 95–116 (TFSTITLPTWLFTLFSMSLTFT) lie on the Lumenal side of the membrane. Residues 117 to 137 (MNFTTLLLIVLGLVSTVSWFI) traverse the membrane as a helical segment. Residues 138 to 1527 (RYRFLNMYSR…RTLAPRRASI (1390 aa)) are Cytoplasmic-facing. Low complexity predominate over residues 299–310 (GSSSSMSSVQPS). 3 disordered regions span residues 299–387 (GSSS…RRKS), 567–596 (DQFA…QRKD), and 765–785 (ATSR…KKPS). Polar residues predominate over residues 364–377 (RASSYHPNGQSTAS). Residues 682–809 (GGTS…SYRS) and 846–966 (RLTG…IAQR) contribute to the a nucleoside 3',5'-cyclic phosphate site. The PNPLA domain occupies 1224–1388 (LVLGGGGARG…IDNLTVAHMK (165 aa)). The GXGXXG motif lies at 1228 to 1233 (GGGARG). Residues 1255–1259 (GTSIG) carry the GXSXG motif. The active-site Nucleophile is the S1257. Catalysis depends on D1375, which acts as the Proton acceptor. The short motif at 1375–1377 (DGG) is the DGA/G element. The interval 1504–1527 (LPLPEENEEKKKLQRTLAPRRASI) is disordered.

The protein belongs to the NTE family.

The protein localises to the endoplasmic reticulum membrane. The catalysed reaction is a 1-acyl-sn-glycero-3-phosphocholine + H2O = sn-glycerol 3-phosphocholine + a fatty acid + H(+). With respect to regulation, inhibited by organophosphorus esters. In terms of biological role, intracellular phospholipase B that catalyzes the double deacylation of phosphatidylcholine (PC) to glycerophosphocholine (GroPCho). Plays an important role in membrane lipid homeostasis. Responsible for the rapid PC turnover in response to inositol, elevated temperatures, or when choline is present in the growth medium. The chain is Lysophospholipase nte1 (nte1) from Emericella nidulans (strain FGSC A4 / ATCC 38163 / CBS 112.46 / NRRL 194 / M139) (Aspergillus nidulans).